The chain runs to 350 residues: S-adenosylmethionine:tRNA ribosyltransferase-isomerase (350 aa).

Belongs to the QueA family. Monomer.

The protein resides in the cytoplasm. It catalyses the reaction 7-aminomethyl-7-carbaguanosine(34) in tRNA + S-adenosyl-L-methionine = epoxyqueuosine(34) in tRNA + adenine + L-methionine + 2 H(+). Its pathway is tRNA modification; tRNA-queuosine biosynthesis. In terms of biological role, transfers and isomerizes the ribose moiety from AdoMet to the 7-aminomethyl group of 7-deazaguanine (preQ1-tRNA) to give epoxyqueuosine (oQ-tRNA). This is S-adenosylmethionine:tRNA ribosyltransferase-isomerase from Bacillus cereus (strain ZK / E33L).